The chain runs to 130 residues: NADH-quinone oxidoreductase subunit A (130 aa).

3 helical membrane-spanning segments follow: residues 17 to 37, 74 to 94, and 99 to 119; these read YIFV…MLAL, LVGI…PWAV, and LGPA…VGFV.

The protein belongs to the complex I subunit 3 family. In terms of assembly, NDH-1 is composed of 14 different subunits. Subunits NuoA, H, J, K, L, M, N constitute the membrane sector of the complex.

The protein localises to the cell inner membrane. It catalyses the reaction a quinone + NADH + 5 H(+)(in) = a quinol + NAD(+) + 4 H(+)(out). NDH-1 shuttles electrons from NADH, via FMN and iron-sulfur (Fe-S) centers, to quinones in the respiratory chain. The immediate electron acceptor for the enzyme in this species is believed to be ubiquinone. Couples the redox reaction to proton translocation (for every two electrons transferred, four hydrogen ions are translocated across the cytoplasmic membrane), and thus conserves the redox energy in a proton gradient. In Neorickettsia sennetsu (strain ATCC VR-367 / Miyayama) (Ehrlichia sennetsu), this protein is NADH-quinone oxidoreductase subunit A.